Reading from the N-terminus, the 221-residue chain is Stromal cell-derived factor 2-like protein 1 (221 aa).

The N-terminal stretch at 1-28 is a signal peptide; it reads MWSAGSGRAAGPALLGILLALSLSGGRA. MIR domains follow at residues 33–87, 95–150, and 151–205; these read AGLV…IRGG, GSPV…VRCS, and GQHW…AMEG. The short motif at 218-221 is the Prevents secretion from ER element; sequence HDEL.

The protein resides in the endoplasmic reticulum lumen. The polypeptide is Stromal cell-derived factor 2-like protein 1 (SDF2L1) (Bos taurus (Bovine)).